Reading from the N-terminus, the 166-residue chain is NADH-quinone oxidoreductase subunit B (166 aa).

Residues C44, C45, C110, and C140 each contribute to the [4Fe-4S] cluster site.

It belongs to the complex I 20 kDa subunit family. NDH-1 is composed of 14 different subunits. Subunits NuoB, C, D, E, F, and G constitute the peripheral sector of the complex. [4Fe-4S] cluster serves as cofactor.

It localises to the cell membrane. It carries out the reaction a quinone + NADH + 5 H(+)(in) = a quinol + NAD(+) + 4 H(+)(out). Functionally, NDH-1 shuttles electrons from NADH, via FMN and iron-sulfur (Fe-S) centers, to quinones in the respiratory chain. The immediate electron acceptor for the enzyme in this species is believed to be a menaquinone. Couples the redox reaction to proton translocation (for every two electrons transferred, four hydrogen ions are translocated across the cytoplasmic membrane), and thus conserves the redox energy in a proton gradient. This chain is NADH-quinone oxidoreductase subunit B, found in Carboxydothermus hydrogenoformans (strain ATCC BAA-161 / DSM 6008 / Z-2901).